We begin with the raw amino-acid sequence, 630 residues long: Probable potassium transport system protein Kup 1 (630 aa).

12 helical membrane passes run 15-35 (FAALALAALGVVYGDIGTSPL), 59-79 (LSLIFWALVIVVSVKYVTFIM), 109-129 (WIMIVGVLGAAMFYGDGMVTP), 145-165 (PALKPFVIPLTMVVLFILFFV), 173-193 (VGAFFGPVMLVWFSALALLGV), 223-243 (LVAMGNVVLAVTGAEALYADM), 255-275 (WFAFVLPALVLNYFGQGALIL), 297-317 (LVGLATLATVIASQAVISGAF), 345-365 (IYLPAVNWGLMVAVMILVLGF), 374-394 (AYGIAVTGDMVITSILATVVV), 405-425 (AGLLFACFLSVELVFLAANIL), and 427-447 (IPDGGWFPLVAGMGVFVLMTT).

Belongs to the HAK/KUP transporter (TC 2.A.72) family.

It is found in the cell inner membrane. It catalyses the reaction K(+)(in) + H(+)(in) = K(+)(out) + H(+)(out). In terms of biological role, transport of potassium into the cell. Likely operates as a K(+):H(+) symporter. The sequence is that of Probable potassium transport system protein Kup 1 from Dechloromonas aromatica (strain RCB).